A 155-amino-acid polypeptide reads, in one-letter code: NADPH-dependent 7-cyano-7-deazaguanine reductase (155 aa).

Residue cysteine 53 is the Thioimide intermediate of the active site. Catalysis depends on aspartate 60, which acts as the Proton donor. Residues 75–77 and 94–95 contribute to the substrate site; these read VES and HE.

This sequence belongs to the GTP cyclohydrolase I family. QueF type 1 subfamily.

It is found in the cytoplasm. The catalysed reaction is 7-aminomethyl-7-carbaguanine + 2 NADP(+) = 7-cyano-7-deazaguanine + 2 NADPH + 3 H(+). Its pathway is tRNA modification; tRNA-queuosine biosynthesis. Catalyzes the NADPH-dependent reduction of 7-cyano-7-deazaguanine (preQ0) to 7-aminomethyl-7-deazaguanine (preQ1). This chain is NADPH-dependent 7-cyano-7-deazaguanine reductase, found in Hyphomonas neptunium (strain ATCC 15444).